A 183-amino-acid chain; its full sequence is Ribosome-recycling factor (183 aa).

It belongs to the RRF family.

Its subcellular location is the cytoplasm. In terms of biological role, responsible for the release of ribosomes from messenger RNA at the termination of protein biosynthesis. May increase the efficiency of translation by recycling ribosomes from one round of translation to another. This Bifidobacterium longum (strain DJO10A) protein is Ribosome-recycling factor.